The following is a 417-amino-acid chain: Serine hydroxymethyltransferase (417 aa).

Residues Leu121 and 125 to 127 each bind (6S)-5,6,7,8-tetrahydrofolate; that span reads GHL. The residue at position 230 (Lys230) is an N6-(pyridoxal phosphate)lysine. A (6S)-5,6,7,8-tetrahydrofolate-binding site is contributed by 355-357; it reads SPF.

The protein belongs to the SHMT family. In terms of assembly, homodimer. Pyridoxal 5'-phosphate serves as cofactor.

It localises to the cytoplasm. The enzyme catalyses (6R)-5,10-methylene-5,6,7,8-tetrahydrofolate + glycine + H2O = (6S)-5,6,7,8-tetrahydrofolate + L-serine. Its pathway is one-carbon metabolism; tetrahydrofolate interconversion. The protein operates within amino-acid biosynthesis; glycine biosynthesis; glycine from L-serine: step 1/1. Functionally, catalyzes the reversible interconversion of serine and glycine with tetrahydrofolate (THF) serving as the one-carbon carrier. This reaction serves as the major source of one-carbon groups required for the biosynthesis of purines, thymidylate, methionine, and other important biomolecules. Also exhibits THF-independent aldolase activity toward beta-hydroxyamino acids, producing glycine and aldehydes, via a retro-aldol mechanism. The chain is Serine hydroxymethyltransferase from Legionella pneumophila (strain Lens).